We begin with the raw amino-acid sequence, 296 residues long: Probable lipid kinase YegS-like (296 aa).

A DAGKc domain is found at 1–130 (MPHTLLILNG…IDLAQVNGEH (130 aa)). Residues T37, 63–69 (GDGTINE), and T92 contribute to the ATP site. L212, D215, and L217 together coordinate Mg(2+). The Proton acceptor role is filled by E268.

The protein belongs to the diacylglycerol/lipid kinase family. YegS lipid kinase subfamily. It depends on Mg(2+) as a cofactor. Requires Ca(2+) as cofactor.

Its subcellular location is the cytoplasm. Functionally, probably phosphorylates lipids; the in vivo substrate is unknown. The protein is Probable lipid kinase YegS-like of Yersinia pseudotuberculosis serotype I (strain IP32953).